Reading from the N-terminus, the 505-residue chain is Protein amnionless (505 aa).

An N-terminal signal peptide occupies residues 1–20 (MGLHWQWLIWALVGLHVALA). The Extracellular segment spans residues 21 to 344 (TKWYGGGMDF…RPYNPNVSFS (324 aa)). The chain crosses the membrane as a helical span at residues 345 to 365 (SIVLILFCMALVGLVSVVILA). Residues 366–505 (HFMPENPYLN…CEADTDEETI (140 aa)) lie on the Cytoplasmic side of the membrane. Residues 451–482 (GALEEAAKESQEQDEILSVPKMETGDLDARSV) form a disordered region. Residues 473–482 (ETGDLDARSV) are compositionally biased toward basic and acidic residues.

As to expression, specifically expressed in nephrocytes.

The protein localises to the cell membrane. Required in the nephrocyte for normal uptake of proteins and elimination of toxins, and for maintenance of endocytic trafficking structures. May function together with Cubn. This is Protein amnionless from Drosophila melanogaster (Fruit fly).